Reading from the N-terminus, the 249-residue chain is 2,3-bisphosphoglycerate-dependent phosphoglycerate mutase (249 aa).

Residues 9–16, 22–23, R61, 88–91, K99, 115–116, and 184–185 each bind substrate; these read RHGQSQWN, TG, ERHY, RR, and GN. H10 acts as the Tele-phosphohistidine intermediate in catalysis. The active-site Proton donor/acceptor is E88.

The protein belongs to the phosphoglycerate mutase family. BPG-dependent PGAM subfamily. Homodimer.

The catalysed reaction is (2R)-2-phosphoglycerate = (2R)-3-phosphoglycerate. Its pathway is carbohydrate degradation; glycolysis; pyruvate from D-glyceraldehyde 3-phosphate: step 3/5. Its function is as follows. Catalyzes the interconversion of 2-phosphoglycerate and 3-phosphoglycerate. This chain is 2,3-bisphosphoglycerate-dependent phosphoglycerate mutase, found in Xylella fastidiosa (strain M12).